A 244-amino-acid polypeptide reads, in one-letter code: Serine-rich single-pass membrane protein 1 (244 aa).

The chain crosses the membrane as a helical span at residues C35–F55. Disordered regions lie at residues D65 to V112, Q132 to Y191, and H213 to F244. Residues A80–A94 show a composition bias toward basic and acidic residues. 2 stretches are compositionally biased toward polar residues: residues P97–V112 and Q132–Q142. A compositionally biased stretch (basic and acidic residues) spans S161–I176. Residues E231–F244 are compositionally biased toward polar residues.

Its subcellular location is the membrane. This Macaca fascicularis (Crab-eating macaque) protein is Serine-rich single-pass membrane protein 1 (SSMEM1).